The primary structure comprises 212 residues: Transcriptional regulator GfcR (212 aa).

The disordered stretch occupies residues 38–60 (LVERSGTGTEPDTSDDGGPHDIH).

It belongs to the purine/pyrimidine phosphoribosyltransferase family. GfcR subfamily.

Its function is as follows. DNA-binding transcriptional regulator that functions as a regulator of central sugar catabolic pathways. This chain is Transcriptional regulator GfcR, found in Haloarcula marismortui (strain ATCC 43049 / DSM 3752 / JCM 8966 / VKM B-1809) (Halobacterium marismortui).